The following is a 216-amino-acid chain: Probable nicotinate-nucleotide adenylyltransferase (216 aa).

This sequence belongs to the NadD family.

It carries out the reaction nicotinate beta-D-ribonucleotide + ATP + H(+) = deamido-NAD(+) + diphosphate. The protein operates within cofactor biosynthesis; NAD(+) biosynthesis; deamido-NAD(+) from nicotinate D-ribonucleotide: step 1/1. Functionally, catalyzes the reversible adenylation of nicotinate mononucleotide (NaMN) to nicotinic acid adenine dinucleotide (NaAD). This is Probable nicotinate-nucleotide adenylyltransferase from Maridesulfovibrio salexigens (strain ATCC 14822 / DSM 2638 / NCIMB 8403 / VKM B-1763) (Desulfovibrio salexigens).